The chain runs to 589 residues: L-fucose isomerase (589 aa).

Active-site proton acceptor residues include E340 and D364. Residues E340, D364, and H527 each coordinate Mn(2+).

The protein belongs to the L-fucose isomerase family. Mn(2+) is required as a cofactor.

The protein resides in the cytoplasm. It catalyses the reaction L-fucose = L-fuculose. It participates in carbohydrate degradation; L-fucose degradation; L-lactaldehyde and glycerone phosphate from L-fucose: step 1/3. Converts the aldose L-fucose into the corresponding ketose L-fuculose. The protein is L-fucose isomerase of Haemophilus influenzae (strain PittEE).